The primary structure comprises 338 residues: Trace amine-associated receptor 1 (338 aa).

Topologically, residues 1-24 (MPFCHNIINISCVKNNWSNDVRAS) are extracellular. 3 cysteine pairs are disulfide-bonded: Cys4-Cys177, Cys12-Cys87, and Cys95-Cys181. N-linked (GlcNAc...) asparagine glycosylation is found at Asn9 and Asn16. Residues 25-45 (LYSLMALIILTTLVGNLIVIV) traverse the membrane as a helical segment. The Cytoplasmic portion of the chain corresponds to 46-58 (SISHFKQLHTPTN). The chain crosses the membrane as a helical span at residues 59 to 79 (WLIHSMATVDFLLGCLVMPYS). Topologically, residues 80-97 (MVRSAEHCWYFGEVFCKI) are extracellular. A helical transmembrane segment spans residues 98-118 (HTSTDIMLSSASIFHLSFISI). Residue Asp102 participates in 2-phenylethylamine binding. Topologically, residues 119-135 (DRYYAVCDPLRYKAKIN) are cytoplasmic. The helical transmembrane segment at 136–156 (ILVVCVMIFISWSVPAVFAFG) threads the bilayer. Over 157 to 187 (MIFLELNFKGAEEIYYKHVHCRGGCSVFFSK) the chain is Extracellular. The helical transmembrane segment at 188-208 (ISGVLAFMTSFYIPGSIMLCI) threads the bilayer. The Cytoplasmic portion of the chain corresponds to 209 to 251 (YYRIYLIAKEQARSINDANQKLQIGLEMKNGISQSKERKAVKT). A helical transmembrane segment spans residues 252-272 (LGIVMGVFLICWCPFFVCTVI). At 273–286 (DPFLHYTIPPTLND) the chain is on the extracellular side. The chain crosses the membrane as a helical span at residues 287-307 (VLIWFGYLNSTFNPMVYAFFY). Over 308 to 338 (PWFRKALKMILFGKIFQKDSSRCKLFLESSS) the chain is Cytoplasmic.

This sequence belongs to the G-protein coupled receptor 1 family.

The protein resides in the endomembrane system. It is found in the endoplasmic reticulum membrane. The protein localises to the cell membrane. Its function is as follows. Intracellular G-protein coupled receptor for trace amines, which recognizes endogenous amine-containing metabolites such as beta-phenylethylamine (beta-PEA), 3-iodothyronamine (T1AM), isoamylamine (IAA), cadaverine (CAD), cyclohexylamine (CHA), p-tyramine (p-TYR), trimethylamine (TMA), octopamine and tryptamine. Also functions as a receptor for various drugs and psychoactive substances, such as amphetamine and methamphetamine. Unresponsive to classical biogenic amines, such as epinephrine and histamine and only partially activated by dopamine and serotonin. Expressed in both the central and peripheral nervous system: TAAR1 activation regulates the activity of several neurotransmitter signaling pathways by (1) decreasing the basal firing rates of the neurons involved and by (2) lowering the sensitivity of receptors to neurotransmitters. Ligand binding causes a conformation change that triggers signaling via guanine nucleotide-binding proteins (G proteins) and modulates the activity of downstream effectors. TAAR1 is coupled with different G(i)/G(o)-, G(s)- or G(q)/G(11) classes of G alpha proteins depending on the ligand. CAD-binding is coupled to G(i)/G(o) G alpha proteins and mediates inhibition of adenylate cyclase activity. T1AM- or beta-PEA-binding is coupled to G(s) G alpha proteins and mediates activation of adenylate cyclase activity. CHA- or IAA-binding is coupled to G(q)/G(11) G alpha proteins and activates phospholipase C-beta, releasing diacylglycerol (DAG) and inositol 1,4,5-trisphosphate (IP3) second messengers. TMA-binding is coupled with all three G(i)/G(o)-, G(s)- or G(q)/G(11) G alpha protein subtypes. The polypeptide is Trace amine-associated receptor 1 (TAAR1) (Macaca mulatta (Rhesus macaque)).